Consider the following 200-residue polypeptide: Large ribosomal subunit protein bL25 (200 aa).

Belongs to the bacterial ribosomal protein bL25 family. CTC subfamily. As to quaternary structure, part of the 50S ribosomal subunit; part of the 5S rRNA/L5/L18/L25 subcomplex. Contacts the 5S rRNA. Binds to the 5S rRNA independently of L5 and L18.

In terms of biological role, this is one of the proteins that binds to the 5S RNA in the ribosome where it forms part of the central protuberance. The sequence is that of Large ribosomal subunit protein bL25 from Nocardia farcinica (strain IFM 10152).